Here is a 504-residue protein sequence, read N- to C-terminus: Carnosic acid synthase (504 aa).

Residues 4 to 24 (FIILSLAFIAAWVVYSRWSEY) traverse the membrane as a helical segment. Cys-447 serves as a coordination point for heme.

It belongs to the cytochrome P450 family. Requires heme as cofactor. Expressed in glandular trichomes of young leaves.

It is found in the membrane. It catalyses the reaction 11-hydroxyferruginol + 3 reduced [NADPH--hemoprotein reductase] + 3 O2 = carnosate + 3 oxidized [NADPH--hemoprotein reductase] + 4 H2O + 4 H(+). The enzyme catalyses miltiradiene + 2 reduced [NADPH--hemoprotein reductase] + 2 O2 = miltiradien-20-al + 2 oxidized [NADPH--hemoprotein reductase] + 3 H2O + 2 H(+). It carries out the reaction ferruginol + 3 reduced [NADPH--hemoprotein reductase] + 3 O2 = pisiferate + 3 oxidized [NADPH--hemoprotein reductase] + 4 H2O + 4 H(+). The protein operates within secondary metabolite biosynthesis; terpenoid biosynthesis. In terms of biological role, monooxygenase involved in the biosynthesis of carnosate, a potent antioxidant labdane-related diterpene natural products. Catalyzes the oxidation of 11-hydroxyferruginol to produce carnosate. Mediates the conversion of miltiradien into miltiradien-20-al. Also involved in the production of pisiferic acid and derivative products from ferruginol. The sequence is that of Carnosic acid synthase from Rosmarinus officinalis (Rosemary).